The sequence spans 212 residues: Large ribosomal subunit protein uL3 (212 aa).

Residues 139–153 (LSHRVTGSIGQNQTP) show a composition bias toward polar residues. Residues 139-161 (LSHRVTGSIGQNQTPGKVFKGKK) are disordered. Gln-151 is modified (N5-methylglutamine).

It belongs to the universal ribosomal protein uL3 family. As to quaternary structure, part of the 50S ribosomal subunit. Forms a cluster with proteins L14 and L19. Post-translationally, methylated by PrmB.

One of the primary rRNA binding proteins, it binds directly near the 3'-end of the 23S rRNA, where it nucleates assembly of the 50S subunit. This is Large ribosomal subunit protein uL3 from Baumannia cicadellinicola subsp. Homalodisca coagulata.